A 252-amino-acid polypeptide reads, in one-letter code: Pantothenate synthetase (252 aa).

29 to 36 contributes to the ATP binding site; sequence MGNLHAGH. The active-site Proton donor is the H36. Q60 contributes to the (R)-pantoate binding site. Beta-alanine is bound at residue Q60. 146–149 contributes to the ATP binding site; that stretch reads GEKD. Q152 is a binding site for (R)-pantoate. Residues V175 and 183-186 each bind ATP; that span reads CSSR.

It belongs to the pantothenate synthetase family. As to quaternary structure, homodimer.

It localises to the cytoplasm. It carries out the reaction (R)-pantoate + beta-alanine + ATP = (R)-pantothenate + AMP + diphosphate + H(+). The protein operates within cofactor biosynthesis; (R)-pantothenate biosynthesis; (R)-pantothenate from (R)-pantoate and beta-alanine: step 1/1. Its function is as follows. Catalyzes the condensation of pantoate with beta-alanine in an ATP-dependent reaction via a pantoyl-adenylate intermediate. The polypeptide is Pantothenate synthetase (Legionella pneumophila (strain Lens)).